Here is a 102-residue protein sequence, read N- to C-terminus: Putative ubiquitin-like protein FUBI-like protein ENSP00000310146 (102 aa).

Residues 23-99 enclose the Ubiquitin-like domain; sequence LCPQVAYVRA…LEVVGRRLGV (77 aa).

The chain is Putative ubiquitin-like protein FUBI-like protein ENSP00000310146 from Homo sapiens (Human).